A 959-amino-acid polypeptide reads, in one-letter code: Vacuolar membrane protease (959 aa).

Over 1–13 (MARLNPLSFTPGP) the chain is Cytoplasmic. A helical membrane pass occupies residues 14–34 (VIFFTCAVYIALFAALLTVHL). At 35-378 (RVPDYPSKTP…KVFVVFQLHT (344 aa)) the chain is on the vacuolar side. N-linked (GlcNAc...) asparagine glycosylation is found at Asn-48, Asn-102, and Asn-105. The disordered stretch occupies residues 128–149 (GSEDDEPYHSPQSSPPGERRLD). The Zn(2+) site is built by His-158 and Asp-170. The active-site Proton acceptor is Glu-204. Residues Glu-205, Glu-230, and His-303 each coordinate Zn(2+). The helical transmembrane segment at 379–399 (MFALCVTLLVVAPLFLIGLTF) threads the bilayer. Residues 400–432 (GLSKADKNYLFARKAYMYSSDDDHPVHLYGWRG) are Cytoplasmic-facing. A helical transmembrane segment spans residues 433–453 (FFRFPIVFSIATAVVVGLAYL). The Vacuolar portion of the chain corresponds to 454-463 (MVRLNPLILY). The helical transmembrane segment at 464–484 (SSPYAVWSMMLSAWFSVAWFF) threads the bilayer. Residues 485-498 (SRGASAMRPSALQR) are Cytoplasmic-facing. Residues 499 to 519 (MYALIWLFAGSFALLAFVTVL) form a helical membrane-spanning segment. At 520-524 (SNNYQ) the chain is on the vacuolar side. A helical transmembrane segment spans residues 525–545 (VAGGYFALFYFAGIFLALVLS). Over 546–645 (YLELFFAPTK…YPGEQDWSGK (100 aa)) the chain is Cytoplasmic. 2 disordered regions span residues 566–594 (DEPV…DATE) and 606–635 (FARH…LKQP). Basic and acidic residues predominate over residues 612-626 (RRDSIDDENGNRDEE). The chain crosses the membrane as a helical span at residues 646-666 (LPGWLWLLQLLLVAPIVVILV). The Vacuolar segment spans residues 667-688 (GQIALLLTSALHQTPADGNSSL). An N-linked (GlcNAc...) asparagine glycan is attached at Asn-685. The helical transmembrane segment at 689-709 (FVYLAFALLTTLLLAPIGPFI) threads the bilayer. Topologically, residues 710 to 716 (HRFTWHV) are cytoplasmic. The chain crosses the membrane as a helical span at residues 717-737 (PTFVFLVCVATVIYNLVAFPF). Residues 738–959 (SREHRLKVYF…LVEGFKYFQV (222 aa)) are Vacuolar-facing. Residues Asn-785, Asn-818, Asn-834, Asn-864, and Asn-899 are each glycosylated (N-linked (GlcNAc...) asparagine).

It belongs to the peptidase M28 family. The cofactor is Zn(2+).

Its subcellular location is the vacuole membrane. Its function is as follows. May be involved in vacuolar sorting and osmoregulation. This Phaeosphaeria nodorum (strain SN15 / ATCC MYA-4574 / FGSC 10173) (Glume blotch fungus) protein is Vacuolar membrane protease.